The primary structure comprises 317 residues: COP9 signalosome complex subunit 6a (317 aa).

The 135-residue stretch at 30–164 (TQLNPPASIC…VTIYESELHV (135 aa)) folds into the MPN domain.

The protein belongs to the peptidase M67A family. CSN6 subfamily. In terms of assembly, component of the CSN complex, probably composed of CSN1, CSN2, CSN3, CSN4, CSN5 (CSN5A or CSN5B), CSN6 (CSN6A or CSN6B), CSN7 and CSN8. Interacts with itself. In the complex, it probably interacts directly with CSN4 and CSN5A or CSN5B. Interacts with CSN7 (via C-terminal tail). Binds to the translation initiation factors TIF3E1.

It is found in the cytoplasm. Its subcellular location is the nucleus. Its function is as follows. Component of the COP9 signalosome complex (CSN), a complex involved in various cellular and developmental processes such as photomorphogenesis and auxin and jasmonate responses. The CSN complex is an essential regulator of the ubiquitin (Ubl) conjugation pathway by mediating the deneddylation of the cullin subunits of SCF-type E3 ligase complexes, leading to decrease the Ubl ligase activity of SCF. It is involved in repression of photomorphogenesis in darkness by regulating the activity of COP1-containing Ubl ligase complexes. The complex is also required for degradation of PSIAA6 by regulating the activity of the Ubl ligase SCF-TIR complex. Essential for the structural integrity of the CSN holocomplex. This Arabidopsis thaliana (Mouse-ear cress) protein is COP9 signalosome complex subunit 6a.